The chain runs to 323 residues: Beta-ketoacyl-[acyl-carrier-protein] synthase III (323 aa).

Residues Cys113 and His250 contribute to the active site. An ACP-binding region spans residues 251–255; the sequence is QANLR. The active site involves Asn280.

Belongs to the thiolase-like superfamily. FabH family. As to quaternary structure, homodimer.

Its subcellular location is the cytoplasm. The catalysed reaction is malonyl-[ACP] + acetyl-CoA + H(+) = 3-oxobutanoyl-[ACP] + CO2 + CoA. Its pathway is lipid metabolism; fatty acid biosynthesis. Functionally, catalyzes the condensation reaction of fatty acid synthesis by the addition to an acyl acceptor of two carbons from malonyl-ACP. Catalyzes the first condensation reaction which initiates fatty acid synthesis and may therefore play a role in governing the total rate of fatty acid production. Possesses both acetoacetyl-ACP synthase and acetyl transacylase activities. Its substrate specificity determines the biosynthesis of branched-chain and/or straight-chain of fatty acids. In Paracoccus denitrificans (strain Pd 1222), this protein is Beta-ketoacyl-[acyl-carrier-protein] synthase III.